Consider the following 76-residue polypeptide: Conotoxin VnMSGL-0112 (76 aa).

The N-terminal stretch at 1–20 (MSGLGIMVLTLLLLVSMATS) is a signal peptide. A propeptide spanning residues 21-45 (HQDGRGKQATQRDAINVRRRRSITR) is cleaved from the precursor. 3 disulfide bridges follow: Cys-49/Cys-61, Cys-53/Cys-70, and Cys-60/Cys-74.

This sequence belongs to the conotoxin O3 superfamily. Expressed by the venom duct.

The protein localises to the secreted. The sequence is that of Conotoxin VnMSGL-0112 from Conus ventricosus (Mediterranean cone).